The primary structure comprises 458 residues: Divalent metal cation transporter MntH (458 aa).

A run of 11 helical transmembrane segments spans residues 38 to 58 (GFWK…VGYM), 76 to 96 (SLLS…AMAA), 119 to 139 (GGFL…AEII), 151 to 171 (MPLI…LLLM), 180 to 200 (AVVA…VILA), 223 to 243 (MLYL…LFLG), 275 to 295 (LTMA…LFFG), 315 to 335 (IVGA…LLAS), 370 to 390 (LMSV…EAKI), 393 to 413 (LLTF…IPLV), and 437 to 457 (FISG…LGFV).

It belongs to the NRAMP family.

Its subcellular location is the cell membrane. H(+)-stimulated, divalent metal cation uptake system. In Lacticaseibacillus casei (strain BL23) (Lactobacillus casei), this protein is Divalent metal cation transporter MntH.